The following is a 689-amino-acid chain: Glycine--tRNA ligase beta subunit (689 aa).

The protein belongs to the class-II aminoacyl-tRNA synthetase family. In terms of assembly, tetramer of two alpha and two beta subunits.

It localises to the cytoplasm. It carries out the reaction tRNA(Gly) + glycine + ATP = glycyl-tRNA(Gly) + AMP + diphosphate. This chain is Glycine--tRNA ligase beta subunit, found in Escherichia coli O139:H28 (strain E24377A / ETEC).